The chain runs to 253 residues: 5-oxoprolinase subunit A (253 aa).

The protein belongs to the LamB/PxpA family. In terms of assembly, forms a complex composed of PxpA, PxpB and PxpC.

It catalyses the reaction 5-oxo-L-proline + ATP + 2 H2O = L-glutamate + ADP + phosphate + H(+). Catalyzes the cleavage of 5-oxoproline to form L-glutamate coupled to the hydrolysis of ATP to ADP and inorganic phosphate. This is 5-oxoprolinase subunit A from Bacillus licheniformis (strain ATCC 14580 / DSM 13 / JCM 2505 / CCUG 7422 / NBRC 12200 / NCIMB 9375 / NCTC 10341 / NRRL NRS-1264 / Gibson 46).